A 1495-amino-acid chain; its full sequence is MGDTAKPYFVKRTKDRGTMDDDDFRRGHPQQDYLIIDDHAKGHGSKMEKGLQKKKITPGNYGNTPRKGPCAVSSNPYAFKNPIYSQPAWMNDSHKDQSKRWLSDEHTGNSDNWREFKPGPRIPVINRQRKDSFQENEDGYRWQDTRGCRTVRRLFHKDLTSLETTSEMEAGSPENKKQRSRPRKPRKTRNEENEQDGDLEGPVIDESVLSTKELLGLQQAEERLKRDCIDRLKRRPRNYPTAKYTCRLCDVLIESIAFAHKHIKEKRHKKNIKEKQEEELLTTLPPPTPSQINAVGIAIDKVVQEFGLHNENLEQRLEIKRIMENVFQHKLPDCSLRLYGSSCSRLGFKNSDVNIDIQFPAIMSQPDVLLLVQECLKNSDSFIDVDADFHARVPVVVCREKQSGLLCKVSAGNENACLTTKHLTALGKLEPKLVPLVIAFRYWAKLCSIDRPEEGGLPPYVFALMAIFFLQQRKEPLLPVYLGSWIEGFSLSKLGNFNLQDIEKDVVIWEHTDSAAGDTGITKEEAPRETPIKRGQVSLILDVKHQPSVPVGQLWVELLRFYALEFNLADLVISIRVKELVSRELKDWPKKRIAIEDPYSVKRNVARTLNSQPVFEYILHCLRTTYKYFALPHKITKSSLLKPLNAITCISEHSKEVINHHPDVQTKDDKLKNSVLAQGPGATSSAANTCKVQPLTLKETAESFGSPPKEEMGNEHISVHPENSDCIQADVNSDDYKGDKVYHPETGRKNEKEKVGRKGKHLLTVDQKRGEHVVCGSTRNNESESTLDLEGFQNPTAKECEGLATLDNKADLDGESTEGTEELEDSLNHFTHSVQGQTSEMIPSDEEEEDDEEEEEEEEPRLTINQREDEDGMANEDELDNTYTGSGDEDALSEEDDELGEAAKYEDVKECGKHVERALLVELNKISLKEENVCEEKNSPVDQSDFFYEFSKLIFTKGKSPTVVCSLCKREGHLKKDCPEDFKRIQLEPLPPLTPKFLNILDQVCIQCYKDFSPTIIEDQAREHIRQNLESFIRQDFPGTKLSLFGSSKNGFGFKQSDLDVCMTINGLETAEGLDCVRTIEELARVLRKHSGLRNILPITTAKVPIVKFFHLRSGLEVDISLYNTLALHNTRLLSAYSAIDPRVKYLCYTMKVFTKMCDIGDASRGSLSSYAYTLMVLYFLQQRNPPVIPVLQEIYKGEKKPEIFVDGWNIYFFDQIDELPTYWSECGKNTESVGQLWLGLLRFYTEEFDFKEHVISIRRKSLLTTFKKQWTSKYIVIEDPFDLNHNLGAGLSRKMTNFIMKAFINGRRVFGIPVKGFPKDYPSKMEYFFDPDVLTEGELAPNDRCCRICGKIGHFMKDCPMRRKVRRRRDQEDALNQRYPENKEKRSKEDKEIHNKYTEREVSTKEDKPIQCTPQKAKPMRAAADLGREKILRPPVEKWKRQDDKDLREKRCFICGREGHIKKECPQFKGSSGSLSSKYMTQGKASAKRTQQES.

4 disordered regions span residues 1-30 (MGDT…GHPQ), 43-69 (HGSK…RKGP), 89-140 (WMND…EDGY), and 162-205 (LETT…PVID). The segment covering 15–26 (DRGTMDDDDFRR) has biased composition (basic and acidic residues). T57 and T64 each carry phosphothreonine. 2 stretches are compositionally biased toward basic and acidic residues: residues 92–118 (DSHK…EFKP) and 128–140 (QRKD…EDGY). Phosphoserine occurs at positions 132 and 172. Over residues 178–187 (QRSRPRKPRK) the composition is skewed to basic residues. A Matrin-type zinc finger spans residues 244–274 (YTCRLCDVLIESIAFAHKHIKEKRHKKNIKE). The PAP-associated 1 domain occupies 551-600 (VGQLWVELLRFYALEFNLADLVISIRVKELVSRELKDWPKKRIAIEDPYS). Phosphoserine is present on S600. Residues 734-756 (DDYKGDKVYHPETGRKNEKEKVG) are compositionally biased toward basic and acidic residues. Disordered stretches follow at residues 734 to 757 (DDYK…KVGR) and 831 to 898 (THSV…EDDE). The span at 831-841 (THSVQGQTSEM) shows a compositional bias: polar residues. 3 stretches are compositionally biased toward acidic residues: residues 843-859 (PSDE…EEEE), 868-880 (EDED…DELD), and 887-898 (GDEDALSEEDDE). Position 844 is a phosphoserine (S844). A phosphoserine mark is found at S893 and S939. The sufficient for monouridylation activity stretch occupies residues 951–1495 (SKLIFTKGKS…ASAKRTQQES (545 aa)). The CCHC-type 1 zinc finger occupies 963–980 (VVCSLCKREGHLKKDCPE). Residues 1047–1050 (SSKN), 1057–1060 (SDLD), N1130, K1152, 1170–1174 (SYAYT), and H1286 each bind UTP. Positions 1058 and 1060 each coordinate Mg(2+). The region spanning 1233–1286 (SVGQLWLGLLRFYTEEFDFKEHVISIRRKSLLTTFKKQWTSKYIVIEDPFDLNH) is the PAP-associated 2 domain. A CCHC-type 2 zinc finger spans residues 1345–1362 (RCCRICGKIGHFMKDCPM). Disordered stretches follow at residues 1367-1424 (RRRR…MRAA) and 1466-1495 (CPQF…QQES). The segment covering 1381-1410 (PENKEKRSKEDKEIHNKYTEREVSTKEDKP) has biased composition (basic and acidic residues). The CCHC-type 3 zinc finger occupies 1451–1468 (KRCFICGREGHIKKECPQ). Residues 1470–1485 (KGSSGSLSSKYMTQGK) show a composition bias toward polar residues.

It belongs to the DNA polymerase type-B-like family. In terms of assembly, interacts with MOV10; the interaction is RNA-dependent. Requires Mg(2+) as cofactor. Mn(2+) is required as a cofactor.

The protein localises to the cytoplasm. It carries out the reaction RNA(n) + UTP = RNA(n)-3'-uridine ribonucleotide + diphosphate. Uridylyltransferase that mediates the terminal uridylation of mRNAs with short (less than 25 nucleotides) poly(A) tails, hence facilitating global mRNA decay. Essential for both oocyte maturation and fertility. Through 3' terminal uridylation of mRNA, sculpts, with TUT7, the maternal transcriptome by eliminating transcripts during oocyte growth. Involved in microRNA (miRNA)-induced gene silencing through uridylation of deadenylated miRNA targets. Also functions as an integral regulator of microRNA biogenesiS using 3 different uridylation mechanisms. Acts as a suppressor of miRNA biogenesis by mediating the terminal uridylation of some miRNA precursors, including that of let-7 (pre-let-7). Uridylated pre-let-7 RNA is not processed by Dicer and undergo degradation. Pre-let-7 uridylation is strongly enhanced in the presence of LIN28A. In the absence of LIN28A, TUT7 and TUT4 monouridylate group II pre-miRNAs, which includes most of pre-let7 members, that shapes an optimal 3' end overhang for efficient processing. Add oligo-U tails to truncated pre-miRNAS with a 5' overhang which may promote rapid degradation of non-functional pre-miRNA species. Does not play a role in replication-dependent histone mRNA degradation. Due to functional redundancy between TUT4 and TUT7, the identification of the specific role of each of these proteins is difficult. TUT4 and TUT7 restrict retrotransposition of long interspersed element-1 (LINE-1) in cooperation with MOV10 counteracting the RNA chaperonne activity of L1RE1. TUT7 uridylates LINE-1 mRNAs in the cytoplasm which inhibits initiation of reverse transcription once in the nucleus, whereas uridylation by TUT4 destabilizes mRNAs in cytoplasmic ribonucleoprotein granules. This is Terminal uridylyltransferase 7 from Homo sapiens (Human).